The following is a 310-amino-acid chain: Elongation factor Ts, mitochondrial (310 aa).

Residues 1–42 constitute a mitochondrion transit peptide; it reads MGFQVLRSVIQAPLAKRSFLCKSCPSGLRVLYNNILLSSRSY.

This sequence belongs to the EF-Ts family.

It is found in the mitochondrion. In terms of biological role, associates with the EF-Tu.GDP complex and induces the exchange of GDP to GTP. It remains bound to the aminoacyl-tRNA.EF-Tu.GTP complex up to the GTP hydrolysis stage on the ribosome. The polypeptide is Elongation factor Ts, mitochondrial (tsf1) (Schizosaccharomyces japonicus (strain yFS275 / FY16936) (Fission yeast)).